Reading from the N-terminus, the 105-residue chain is Small ribosomal subunit protein uS10 (105 aa).

This sequence belongs to the universal ribosomal protein uS10 family. As to quaternary structure, part of the 30S ribosomal subunit.

Its function is as follows. Involved in the binding of tRNA to the ribosomes. This chain is Small ribosomal subunit protein uS10, found in Synechococcus elongatus (strain ATCC 33912 / PCC 7942 / FACHB-805) (Anacystis nidulans R2).